The chain runs to 307 residues: 4-hydroxythreonine-4-phosphate dehydrogenase (307 aa).

Positions 126 and 127 each coordinate substrate. H156, H195, and H251 together coordinate a divalent metal cation. Substrate-binding residues include K259, N268, and R277.

It belongs to the PdxA family. As to quaternary structure, homodimer. Zn(2+) serves as cofactor. The cofactor is Mg(2+). Requires Co(2+) as cofactor.

The protein resides in the cytoplasm. It catalyses the reaction 4-(phosphooxy)-L-threonine + NAD(+) = 3-amino-2-oxopropyl phosphate + CO2 + NADH. Its pathway is cofactor biosynthesis; pyridoxine 5'-phosphate biosynthesis; pyridoxine 5'-phosphate from D-erythrose 4-phosphate: step 4/5. Its function is as follows. Catalyzes the NAD(P)-dependent oxidation of 4-(phosphooxy)-L-threonine (HTP) into 2-amino-3-oxo-4-(phosphooxy)butyric acid which spontaneously decarboxylates to form 3-amino-2-oxopropyl phosphate (AHAP). The sequence is that of 4-hydroxythreonine-4-phosphate dehydrogenase from Helicobacter pylori (strain G27).